The sequence spans 187 residues: Ribosome-recycling factor (187 aa).

Belongs to the RRF family.

It is found in the cytoplasm. Responsible for the release of ribosomes from messenger RNA at the termination of protein biosynthesis. May increase the efficiency of translation by recycling ribosomes from one round of translation to another. The polypeptide is Ribosome-recycling factor (Lactiplantibacillus plantarum (strain ATCC BAA-793 / NCIMB 8826 / WCFS1) (Lactobacillus plantarum)).